The sequence spans 417 residues: Probable glucuronosyltransferase Os01g0926700 (417 aa).

The Cytoplasmic portion of the chain corresponds to 1 to 3 (MRR). A helical; Signal-anchor for type II membrane protein transmembrane segment spans residues 4 to 24 (WVLAIAILAAAVCFFLGAQAQ). Residues 25-417 (EVRQGHQTER…AGPVGDLKPW (393 aa)) are Lumenal-facing. 2 N-linked (GlcNAc...) asparagine glycosylation sites follow: asparagine 144 and asparagine 405.

It belongs to the glycosyltransferase 47 family.

It is found in the golgi apparatus membrane. Its function is as follows. Involved in the synthesis of glucuronoxylan hemicellulose in secondary cell walls. This chain is Probable glucuronosyltransferase Os01g0926700, found in Oryza sativa subsp. japonica (Rice).